A 430-amino-acid polypeptide reads, in one-letter code: Histidine--tRNA ligase (430 aa).

Belongs to the class-II aminoacyl-tRNA synthetase family.

It is found in the cytoplasm. The enzyme catalyses tRNA(His) + L-histidine + ATP = L-histidyl-tRNA(His) + AMP + diphosphate + H(+). The protein is Histidine--tRNA ligase of Metallosphaera sedula (strain ATCC 51363 / DSM 5348 / JCM 9185 / NBRC 15509 / TH2).